The chain runs to 218 residues: 7-cyano-7-deazaguanine synthase (218 aa).

Residue 11-21 (LSGGMDSATLL) participates in ATP binding. Positions 193, 201, 204, and 207 each coordinate Zn(2+).

Belongs to the QueC family. Zn(2+) is required as a cofactor.

It catalyses the reaction 7-carboxy-7-deazaguanine + NH4(+) + ATP = 7-cyano-7-deazaguanine + ADP + phosphate + H2O + H(+). The protein operates within purine metabolism; 7-cyano-7-deazaguanine biosynthesis. Functionally, catalyzes the ATP-dependent conversion of 7-carboxy-7-deazaguanine (CDG) to 7-cyano-7-deazaguanine (preQ(0)). The protein is 7-cyano-7-deazaguanine synthase of Aquifex aeolicus (strain VF5).